The sequence spans 293 residues: MAWLQIRLNSTDKYAEQISDFLEEIGAVSVTFMDSQDTPIFEPLPGETRLWGNTDVMGLFDAETDMQAVVSALITSGLVTADFAHKVEQIEDKDWEREWMDNFHPMQFGQRLWICPSWREVPDEKAVNIMLDPGLAFGTGTHPTTALCLQWLDGLDLTGKTVIDFGCGSGILAISALKLGAKQAIGIDIDPQAILASQNNAAANGVADRLQLFLAKDQPQALQADVVVANILAGPLKELAPNIMTLVKPQGYLGLSGILATQAQSVCQAYAAVFKLDPVVEKEEWCRITGIKQ.

S-adenosyl-L-methionine is bound by residues threonine 145, glycine 166, aspartate 188, and asparagine 230.

The protein belongs to the methyltransferase superfamily. PrmA family.

It localises to the cytoplasm. It carries out the reaction L-lysyl-[protein] + 3 S-adenosyl-L-methionine = N(6),N(6),N(6)-trimethyl-L-lysyl-[protein] + 3 S-adenosyl-L-homocysteine + 3 H(+). Methylates ribosomal protein L11. This chain is Ribosomal protein L11 methyltransferase, found in Haemophilus ducreyi (strain 35000HP / ATCC 700724).